Consider the following 200-residue polypeptide: Recombination protein RecR (200 aa).

Residues 59–74 (CDICGNVCESSPCPVC) form a C4-type zinc finger. Positions 82-177 (SVICVVEEPK…KVTRLASGLP (96 aa)) constitute a Toprim domain.

The protein belongs to the RecR family.

Functionally, may play a role in DNA repair. It seems to be involved in an RecBC-independent recombinational process of DNA repair. It may act with RecF and RecO. This Bifidobacterium longum (strain DJO10A) protein is Recombination protein RecR.